We begin with the raw amino-acid sequence, 1160 residues long: Carbamoyl phosphate synthase arginine-specific large chain, mitochondrial (1160 aa).

The tract at residues 81–478 (AEHEKVKKVV…SLQKALRQVD (398 aa)) is carboxyphosphate synthetic domain. R208, R248, G254, G255, K285, L287, E292, G318, I319, H320, Q361, and E375 together coordinate ATP. The ATP-grasp 1 domain maps to 212-404 (AKALNEINIP…LAYTAAKIAL (193 aa)). Mg(2+) is bound by residues Q361, E375, and N377. 3 residues coordinate Mn(2+): Q361, E375, and N377. The segment at 479-623 (PSFLGFMAMP…YTSYNASSHD (145 aa)) is oligomerization domain. A carbamoyl phosphate synthetic domain region spans residues 624–1012 (IDFNEHGTMV…AYWAALQSTQ (389 aa)). Residues 748-946 (SQILDKIGVD…FIDVATRSII (199 aa)) form the ATP-grasp 2 domain. Residues R784, K823, I825, E830, G855, V856, H857, S858, Q898, and E917 each contribute to the ATP site. Mg(2+) is bound by residues Q898, E917, and N919. Mn(2+) contacts are provided by Q898, E917, and N919. The allosteric domain stretch occupies residues 1013-1144 (NFKIPLPGQG…PSVLSEKKEM (132 aa)). The MGS-like domain maps to 1014–1160 (FKIPLPGQGI…WSEWIGSHDL (147 aa)).

This sequence belongs to the CarB family. In terms of assembly, heterodimer composed of 2 chains; the small (or glutamine) chain promotes the hydrolysis of glutamine to ammonia, which is used by the large (or ammonia) chain to synthesize carbamoyl phosphate. Requires Mg(2+) as cofactor. Mn(2+) is required as a cofactor.

The protein resides in the mitochondrion. The catalysed reaction is hydrogencarbonate + L-glutamine + 2 ATP + H2O = carbamoyl phosphate + L-glutamate + 2 ADP + phosphate + 2 H(+). It carries out the reaction hydrogencarbonate + NH4(+) + 2 ATP = carbamoyl phosphate + 2 ADP + phosphate + 2 H(+). It functions in the pathway amino-acid biosynthesis; L-arginine biosynthesis; carbamoyl phosphate from bicarbonate: step 1/1. Functionally, large subunit of the arginine-specific carbamoyl phosphate synthase (CPSase). CPSase catalyzes the formation of carbamoyl phosphate from the ammonia moiety of glutamine, hydrogencarbonate, and phosphate donated by ATP, the first step of the arginine biosynthetic pathway. The large subunit (synthetase) binds the substrates ammonia (free or transferred from glutamine from the small subunit), hydrogencarbonate and ATP and carries out an ATP-coupled ligase reaction, activating hydrogencarbonate by forming carboxy phosphate which reacts with ammonia to form carbamoyl phosphate. This is Carbamoyl phosphate synthase arginine-specific large chain, mitochondrial (arg4) from Schizosaccharomyces pombe (strain 972 / ATCC 24843) (Fission yeast).